Reading from the N-terminus, the 105-residue chain is Small ribosomal subunit protein uS10 (105 aa).

This sequence belongs to the universal ribosomal protein uS10 family. Part of the 30S ribosomal subunit.

In terms of biological role, involved in the binding of tRNA to the ribosomes. This is Small ribosomal subunit protein uS10 from Francisella tularensis subsp. mediasiatica (strain FSC147).